Here is a 120-residue protein sequence, read N- to C-terminus: Immunoglobulin kappa variable 2-29 (120 aa).

The signal sequence occupies residues 1–20 (MRLPAQLLGLLMLWIPGSSA). The tract at residues 21-43 (DIVMTQTPLSLSVTPGQPASISC) is framework-1. Residues 21–120 (DIVMTQTPLS…YYCMQGIHLP (100 aa)) enclose the Ig-like domain. The cysteines at positions 43 and 113 are disulfide-linked. The segment at 44 to 59 (KSSQSLLHSDGKTYLY) is complementarity-determining-1. The framework-2 stretch occupies residues 60-74 (WYLQKPGQSPQLLIY). A complementarity-determining-2 region spans residues 75-81 (EVSSRFS). The tract at residues 82 to 113 (GVPDRFSGSGSGTDFTLKISRVEAEDVGVYYC) is framework-3. The complementarity-determining-3 stretch occupies residues 114–120 (MQGIHLP).

As to quaternary structure, immunoglobulins are composed of two identical heavy chains and two identical light chains; disulfide-linked.

Its subcellular location is the secreted. The protein localises to the cell membrane. Its function is as follows. V region of the variable domain of immunoglobulin light chains that participates in the antigen recognition. Immunoglobulins, also known as antibodies, are membrane-bound or secreted glycoproteins produced by B lymphocytes. In the recognition phase of humoral immunity, the membrane-bound immunoglobulins serve as receptors which, upon binding of a specific antigen, trigger the clonal expansion and differentiation of B lymphocytes into immunoglobulins-secreting plasma cells. Secreted immunoglobulins mediate the effector phase of humoral immunity, which results in the elimination of bound antigens. The antigen binding site is formed by the variable domain of one heavy chain, together with that of its associated light chain. Thus, each immunoglobulin has two antigen binding sites with remarkable affinity for a particular antigen. The variable domains are assembled by a process called V-(D)-J rearrangement and can then be subjected to somatic hypermutations which, after exposure to antigen and selection, allow affinity maturation for a particular antigen. The protein is Immunoglobulin kappa variable 2-29 of Homo sapiens (Human).